Reading from the N-terminus, the 60-residue chain is Large ribosomal subunit protein bL32 (60 aa).

Disordered regions lie at residues 1-28 and 41-60; these read MAVQ…PGIA and HISP…KSEA. A compositionally biased stretch (basic residues) spans 9 to 19; the sequence is SPSKRGMHRSH.

The protein belongs to the bacterial ribosomal protein bL32 family.

The chain is Large ribosomal subunit protein bL32 from Verminephrobacter eiseniae (strain EF01-2).